A 214-amino-acid polypeptide reads, in one-letter code: Ceramide-1-phosphate transfer protein (214 aa).

5 residues coordinate an N-acylsphingoid base 1-phosphate: D56, K60, R106, R110, and H150.

The protein belongs to the GLTP family. As to expression, ubiquitous. Detected in heart, brain, placenta, lung, liver, skeletal muscle, kidney, pancreas, spleen, thymus, prostate, testis, ovary, small intestine, colon and peripheral blood leukocytes.

The protein resides in the cytoplasm. The protein localises to the cytosol. It localises to the golgi apparatus. It is found in the trans-Golgi network membrane. Its subcellular location is the cell membrane. The protein resides in the endosome membrane. The protein localises to the nucleus outer membrane. It catalyses the reaction N-(hexadecanoyl)-sphing-4-enine-1-phosphate(in) = N-(hexadecanoyl)-sphing-4-enine-1-phosphate(out). The enzyme catalyses N-(9Z-octadecenoyl)-sphing-4-enine-1-phosphate(in) = N-(9Z-octadecenoyl)-sphing-4-enine-1-phosphate(out). Its function is as follows. Mediates the intracellular transfer of ceramide-1-phosphate (C1P) between organelle membranes and the cell membrane. Required for normal structure of the Golgi stacks. Can bind phosphoceramides with a variety of aliphatic chains, but has a preference for lipids with saturated C16:0 or monounsaturated C18:1 aliphatic chains, and is inefficient with phosphoceramides containing lignoceryl (C24:0). Plays a role in the regulation of the cellular levels of ceramide-1-phosphate, and thereby contributes to the regulation of phospholipase PLA2G4A activity and the release of arachidonic acid. Has no activity with galactosylceramide, lactosylceramide, sphingomyelin, phosphatidylcholine, phosphatidic acid and ceramide. C1P transfer is stimulated by phosphatidylserine in C1P source vesicles. Regulates autophagy, inflammasome mediated IL1B and IL18 processing, and pyroptosis, but not apoptosis. The sequence is that of Ceramide-1-phosphate transfer protein from Homo sapiens (Human).